Here is a 776-residue protein sequence, read N- to C-terminus: Hepatocyte growth factor-regulated tyrosine kinase substrate (776 aa).

Residues 15-143 (ATSQLLLETD…IMKVEGHVFP (129 aa)) form the VHS domain. Residues 160-220 (WVDAEECHRC…VCEPCYEQLN (61 aa)) form an FYVE-type zinc finger. Residues Cys-166, Cys-169, Cys-182, Cys-185, Cys-190, and Cys-193 each contribute to the Zn(2+) site. Lys-207 carries the post-translational modification N6-acetyllysine. Zn(2+) contacts are provided by Cys-212 and Cys-215. Residue Tyr-216 is modified to Phosphotyrosine. The tract at residues 223–319 (AEGKAASTTE…SPVNSSAPLA (97 aa)) is disordered. Residues 225–542 (GKAASTTELP…QRLQEQEKER (318 aa)) form an interaction with SNX1 region. Residues 258–277 (QEEEELQLALALSQSEAEEK) enclose the UIM domain. Low complexity predominate over residues 294-311 (PAPLASSAPPAGSLYSSP). Phosphotyrosine is present on residues Tyr-308, Tyr-329, and Tyr-334. The tract at residues 338–401 (KQEEARKSPT…SEQYQNGESE (64 aa)) is disordered. Polar residues predominate over residues 379–398 (TDSQPITSCSGPFSEQYQNG). The interaction with SNAP25 and TRAK2 stretch occupies residues 444–542 (SINSTHPQLL…QRLQEQEKER (99 aa)). An interaction with STAM region spans residues 453–571 (LELLNRLDER…FPLPYAQLQA (119 aa)). Residues 479 to 776 (ARGALSALRE…GNETQLISFD (298 aa)) are interaction with NF2. The residue at position 550 (Lys-550) is an N6-succinyllysine. Positions 719–776 (GQDASLPAQQPYITGQQPMYQQMAPSTGPPQQQPPVAQPPPTQGPPAQGNETQLISFD) are disordered. Positions 725–743 (PAQQPYITGQQPMYQQMAP) are enriched in polar residues. The segment covering 745 to 762 (TGPPQQQPPVAQPPPTQG) has biased composition (pro residues). Positions 767–776 (GNETQLISFD) are enriched in polar residues.

As to quaternary structure, component of the ESCRT-0 complex composed of STAM or STAM2 and HGS. Part of a complex at least composed of HSG, STAM2 (or probably STAM) and EPS15. Interacts with STAM. Interacts with STAM2. Interacts with EPS15; the interaction is direct, calcium-dependent and inhibited by SNAP25. Identified in a complex with STAM and LITAF. Found in a complex with STAM and E3 ligase ITCH and DTX3L. Interacts with E3 ligase DTX3L; the interaction brings together STAM and HSG, promotes their recruitment to early endosomes and decreases STAM and HGS ubiquitination by ITCH. Interacts with NF2; the interaction is direct. Interacts with ubiquitin; the interaction is direct. Interacts with VPS37C. Interacts with SMAD1, SMAD2 and SMAD3. Interacts with TSG101; the interaction mediates the association with the ESCRT-I complex. Interacts with SNAP25; the interaction is direct and decreases with addition of increasing concentrations of free calcium. Interacts with SNX1; the interaction is direct. Component of a 550 kDa membrane complex at least composed of HGS and SNX1 but excluding EGFR. Interacts with TRAK2. Interacts with TRAK1. Component of the CART complex, at least composed of ACTN4, HGS/HRS, MYO5B and TRIM3. Interacts (via UIM domain) with UBQLN1 (via ubiquitin-like domain). Interacts with ARRDC3. Identified in a complex containing at least ARRDC4, AVPR2 and HGS. Interacts with LAPTM4B; promotes HGS ubiquitination. Post-translationally, phosphorylated on Tyr-334. This phosphorylation occurs in response to EGF. A minor site of phosphorylation on Tyr-329 is detected. Protein phosphorylation may also be triggered in response to IL-2, GM-CSF and HGF. In terms of processing, ubiquitinated by ITCH. As to expression, ubiquitously expressed.

It is found in the cytoplasm. The protein localises to the early endosome membrane. Its subcellular location is the endosome. It localises to the multivesicular body membrane. Functionally, involved in intracellular signal transduction mediated by cytokines and growth factors. When associated with STAM, it suppresses DNA signaling upon stimulation by IL-2 and GM-CSF. Could be a direct effector of PI3-kinase in vesicular pathway via early endosomes and may regulate trafficking to early and late endosomes by recruiting clathrin. May concentrate ubiquitinated receptors within clathrin-coated regions. Involved in down-regulation of receptor tyrosine kinase via multivesicular body (MVBs) when complexed with STAM (ESCRT-0 complex). The ESCRT-0 complex binds ubiquitin and acts as a sorting machinery that recognizes ubiquitinated receptors and transfers them to further sequential lysosomal sorting/trafficking processes. Involved in receptor recycling via its association with the CART complex, a multiprotein complex required for efficient transferrin receptor recycling but not for EGFR degradation. May contribute to the efficient recruitment of SMADs to the activin receptor complex. The chain is Hepatocyte growth factor-regulated tyrosine kinase substrate (Hgs) from Rattus norvegicus (Rat).